A 432-amino-acid polypeptide reads, in one-letter code: Ornithine decarboxylase 1A, chloroplastic (432 aa).

Lys-95 is modified (N6-(pyridoxal phosphate)lysine). Pyridoxal 5'-phosphate is bound by residues Ser-227, Gly-265, and 298 to 301 (EPGR). Residue 341 to 342 (YD) participates in substrate binding. The active-site Proton donor; shared with dimeric partner is the Cys-377. Asp-378 contributes to the substrate binding site. Tyr-406 serves as a coordination point for pyridoxal 5'-phosphate.

Belongs to the Orn/Lys/Arg decarboxylase class-II family. Homodimer. Only the dimer is catalytically active, as the active sites are constructed of residues from both monomers. It depends on pyridoxal 5'-phosphate as a cofactor.

It is found in the plastid. The protein resides in the chloroplast. The enzyme catalyses L-ornithine + H(+) = putrescine + CO2. It participates in alkaloid biosynthesis; nicotine biosynthesis. Its pathway is amine and polyamine biosynthesis; putrescine biosynthesis via L-ornithine pathway; putrescine from L-ornithine: step 1/1. Its function is as follows. Involved in the biosynthesis of pyridine alkaloid natural products, leading mainly to the production of anabasine, anatabine, nicotine and nornicotine, effective deterrents against herbivores with antiparasitic and pesticide properties (neurotoxins); nornicotine serves as the precursor in the synthesis of the carcinogen compound N'-nitrosonornicotine (NNN). Catalyzes the first and rate-limiting step of polyamine biosynthesis that converts ornithine into putrescine, which is the precursor for the polyamines, spermidine and spermine. Polyamines are essential for cell proliferation and are implicated in cellular processes, ranging from DNA replication to apoptosis. The polypeptide is Ornithine decarboxylase 1A, chloroplastic (Nicotiana tabacum (Common tobacco)).